A 236-amino-acid chain; its full sequence is Phosphoribosylaminoimidazole-succinocarboxamide synthase (236 aa).

This sequence belongs to the SAICAR synthetase family.

The catalysed reaction is 5-amino-1-(5-phospho-D-ribosyl)imidazole-4-carboxylate + L-aspartate + ATP = (2S)-2-[5-amino-1-(5-phospho-beta-D-ribosyl)imidazole-4-carboxamido]succinate + ADP + phosphate + 2 H(+). The protein operates within purine metabolism; IMP biosynthesis via de novo pathway; 5-amino-1-(5-phospho-D-ribosyl)imidazole-4-carboxamide from 5-amino-1-(5-phospho-D-ribosyl)imidazole-4-carboxylate: step 1/2. The chain is Phosphoribosylaminoimidazole-succinocarboxamide synthase from Pseudomonas entomophila (strain L48).